The sequence spans 187 residues: MADEQNLDNRAPEETPAAEGTSAGEDLAARVQALEEQLAAAQDQALRAAAELQNVRRRAEQDVEKAHKFALERFAQDLLGVVDSLERGIELSDPADESIRPMREGMELTLKMFHDVLRRYQLEQLDPHGEPFNPEHHQAMAMEESDSAEPGSVLKVFQKGYLLSGRLLRPAMVVVSKAPTPSNDEQA.

The segment at 1 to 25 (MADEQNLDNRAPEETPAAEGTSAGE) is disordered.

The protein belongs to the GrpE family. As to quaternary structure, homodimer.

It is found in the cytoplasm. Its function is as follows. Participates actively in the response to hyperosmotic and heat shock by preventing the aggregation of stress-denatured proteins, in association with DnaK and GrpE. It is the nucleotide exchange factor for DnaK and may function as a thermosensor. Unfolded proteins bind initially to DnaJ; upon interaction with the DnaJ-bound protein, DnaK hydrolyzes its bound ATP, resulting in the formation of a stable complex. GrpE releases ADP from DnaK; ATP binding to DnaK triggers the release of the substrate protein, thus completing the reaction cycle. Several rounds of ATP-dependent interactions between DnaJ, DnaK and GrpE are required for fully efficient folding. This chain is Protein GrpE, found in Azotobacter vinelandii (strain DJ / ATCC BAA-1303).